The following is a 64-amino-acid chain: Prokaryotic ubiquitin-like protein Pup (64 aa).

Positions 1–38 are disordered; it reads MAQEQTKRGGGGGEDDDPTGSTAAGQERREKLTEETDD. The tract at residues 21 to 58 is ARC ATPase binding; it reads STAAGQERREKLTEETDDLLDEIDDVLEENAEDFVRAY. Residues 23–52 are a coiled coil; that stretch reads AAGQERREKLTEETDDLLDEIDDVLEENAE. A Deamidated glutamine modification is found at glutamine 64. Residue glutamine 64 forms an Isoglutamyl lysine isopeptide (Gln-Lys) (interchain with K-? in acceptor proteins) linkage.

The protein belongs to the prokaryotic ubiquitin-like protein family. Strongly interacts with the proteasome-associated ATPase ARC through a hydrophobic interface; the interacting region of Pup lies in its C-terminal half. There is one Pup binding site per ARC hexamer ring. In terms of processing, is modified by deamidation of its C-terminal glutamine to glutamate by the deamidase Dop, a prerequisite to the subsequent pupylation process.

It functions in the pathway protein degradation; proteasomal Pup-dependent pathway. Its function is as follows. Protein modifier that is covalently attached to lysine residues of substrate proteins, thereby targeting them for proteasomal degradation. The tagging system is termed pupylation. The polypeptide is Prokaryotic ubiquitin-like protein Pup (Mycolicibacterium gilvum (strain PYR-GCK) (Mycobacterium gilvum (strain PYR-GCK))).